Here is a 257-residue protein sequence, read N- to C-terminus: ATP synthase subunit a (257 aa).

The next 6 membrane-spanning stretches (helical) occupy residues Ile34–Leu54, Tyr93–Val113, His122–Phe142, Phe149–Ile169, Ala187–Met207, and Gly210–Leu230.

Belongs to the ATPase A chain family. In terms of assembly, F-type ATPases have 2 components, CF(1) - the catalytic core - and CF(0) - the membrane proton channel. CF(1) has five subunits: alpha(3), beta(3), gamma(1), delta(1), epsilon(1). CF(0) has three main subunits: a, b and c.

It is found in the mitochondrion inner membrane. Mitochondrial membrane ATP synthase (F(1)F(0) ATP synthase or Complex V) produces ATP from ADP in the presence of a proton gradient across the membrane which is generated by electron transport complexes of the respiratory chain. F-type ATPases consist of two structural domains, F(1) - containing the extramembraneous catalytic core and F(0) - containing the membrane proton channel, linked together by a central stalk and a peripheral stalk. During catalysis, ATP synthesis in the catalytic domain of F(1) is coupled via a rotary mechanism of the central stalk subunits to proton translocation. Key component of the proton channel; it may play a direct role in the translocation of protons across the membrane. This Cochliobolus heterostrophus (Southern corn leaf blight fungus) protein is ATP synthase subunit a (ATP6).